The sequence spans 677 residues: MIDQYKHQQLRIGSVSPQQISTWANKILPNGERVGEVTKPYTFHYKTNKPEKDGLFCERIFGPIKSGICACGNYRVIGDKKKDRKSCEQCGVEFVDSRIRRYQMGYIKLACPVTHVWYLKRLPSYIANLLDKPLKELEGLVYCDFSFARPIAKKPTFLRLRGLFEYEIQSWKYSIPLFFTTQGFDTFRNREISTGAGAIREQLADLDLRIIIDSSLVEWKELGEDGPTGNEWEDRKVGRRKDFLVRRMELAKHFIRTNIDPKWMVLCLLPVLPPELRPIVQIDGGKLMSSDINELYRRVIYRNNTLTDLLTTSRSTPGELIMCQEKLVQEAVDTLLDNGIRGQPMRDGHNKVYKSFSDVIEGKEGRFRETLLGKRVDYSGRSVIVVGPSLSLYQCGLPREIAIELFQTFVIRSLIRQQLASNIGVAKSKIREKKPIVWEILREVMRGHPVLLNRAPTLHRLGIQAFQPVLVEGRAICLHPLVRKGFNADFDGDQMAVHVPLSFEAQAEARLLMFSHINLLSPAIGDPISVPTQDMLIGLYVLTSGNRRGICVNRYNPSNHRNQNKRIYENNYKYTKEKEPFFCNSYDAIGAYRQKRINLDSPLWLRWRLDQRVIAAREAPLEVHYESLGTYYDIYGQYLIVRSIKKEILSIYIRTTVGHISIYREIEEAIQGFCQAC.

The Zn(2+) site is built by C69, C71, C87, and C90. D489, D491, and D493 together coordinate Mg(2+).

Belongs to the RNA polymerase beta' chain family. RpoC1 subfamily. As to quaternary structure, in plastids the minimal PEP RNA polymerase catalytic core is composed of four subunits: alpha, beta, beta', and beta''. When a (nuclear-encoded) sigma factor is associated with the core the holoenzyme is formed, which can initiate transcription. The cofactor is Mg(2+). It depends on Zn(2+) as a cofactor.

The protein localises to the plastid. Its subcellular location is the chloroplast. The enzyme catalyses RNA(n) + a ribonucleoside 5'-triphosphate = RNA(n+1) + diphosphate. DNA-dependent RNA polymerase catalyzes the transcription of DNA into RNA using the four ribonucleoside triphosphates as substrates. The sequence is that of DNA-directed RNA polymerase subunit beta' from Daucus carota (Wild carrot).